Consider the following 244-residue polypeptide: Orotidine 5'-phosphate decarboxylase (244 aa).

Substrate-binding positions include Asp-20, Lys-42, 70 to 79 (DLKFFDIPAT), Thr-125, Arg-186, Gln-195, Gly-215, and Arg-216. Lys-72 (proton donor) is an active-site residue.

The protein belongs to the OMP decarboxylase family. Type 1 subfamily. As to quaternary structure, homodimer.

It catalyses the reaction orotidine 5'-phosphate + H(+) = UMP + CO2. The protein operates within pyrimidine metabolism; UMP biosynthesis via de novo pathway; UMP from orotate: step 2/2. In terms of biological role, catalyzes the decarboxylation of orotidine 5'-monophosphate (OMP) to uridine 5'-monophosphate (UMP). This is Orotidine 5'-phosphate decarboxylase from Xylella fastidiosa (strain M23).